A 95-amino-acid polypeptide reads, in one-letter code: Acyl carrier protein AcpXL (95 aa).

A Carrier domain is found at 4–90 (TATFDKVADI…NLCAKIDELR (87 aa)). The residue at position 39 (serine 39) is an O-(pantetheine 4'-phosphoryl)serine.

Post-translationally, 4'-phosphopantetheine is transferred from CoA to a specific serine of apo-ACP by AcpS. This modification is essential for activity because fatty acids are bound in thioester linkage to the sulfhydryl of the prosthetic group.

It localises to the cytoplasm. It functions in the pathway glycolipid biosynthesis; KDO(2)-lipid A biosynthesis. Carrier of the growing fatty acid chain in fatty acid biosynthesis. Is involved in the transfer of long hydroxylated fatty acids to lipid A. This Rhizobium meliloti (strain 1021) (Ensifer meliloti) protein is Acyl carrier protein AcpXL (acpXL).